We begin with the raw amino-acid sequence, 189 residues long: Penicillin-binding protein activator LpoB (189 aa).

Residues 1–16 (MRRILFVALSVMFLAG) form the signal peptide. Cysteine 17 carries N-palmitoyl cysteine lipidation. Cysteine 17 carries the S-diacylglycerol cysteine lipid modification. Residues 18–52 (PSLPPEQPEPPTPVVPVTPSEKPTPPSEKVPEPPK) are disordered. Residues 19-45 (SLPPEQPEPPTPVVPVTPSEKPTPPSE) are compositionally biased toward pro residues.

The protein belongs to the LpoB family. Interacts with PBP1b.

It is found in the cell outer membrane. Regulator of peptidoglycan synthesis that is essential for the function of penicillin-binding protein 1B (PBP1b). The chain is Penicillin-binding protein activator LpoB from Photorhabdus laumondii subsp. laumondii (strain DSM 15139 / CIP 105565 / TT01) (Photorhabdus luminescens subsp. laumondii).